The following is a 210-amino-acid chain: Proteasome subunit beta (210 aa).

A propeptide spans Met1 to Gly9 (removed in mature form; by autocatalysis). The Nucleophile role is filled by Thr10.

The protein belongs to the peptidase T1B family. The 20S proteasome core is composed of 14 alpha and 14 beta subunits that assemble into four stacked heptameric rings, resulting in a barrel-shaped structure. The two inner rings, each composed of seven catalytic beta subunits, are sandwiched by two outer rings, each composed of seven alpha subunits. The catalytic chamber with the active sites is on the inside of the barrel. Has a gated structure, the ends of the cylinder being occluded by the N-termini of the alpha-subunits. Is capped at one or both ends by the proteasome regulatory ATPase, PAN.

Its subcellular location is the cytoplasm. The enzyme catalyses Cleavage of peptide bonds with very broad specificity.. Its activity is regulated as follows. The formation of the proteasomal ATPase PAN-20S proteasome complex, via the docking of the C-termini of PAN into the intersubunit pockets in the alpha-rings, triggers opening of the gate for substrate entry. Interconversion between the open-gate and close-gate conformations leads to a dynamic regulation of the 20S proteasome proteolysis activity. Functionally, component of the proteasome core, a large protease complex with broad specificity involved in protein degradation. The chain is Proteasome subunit beta from Methanosarcina thermophila.